The chain runs to 515 residues: Bifunctional purine biosynthesis protein PurH (515 aa).

The 145-residue stretch at 1–145 folds into the MGS-like domain; it reads MTKRALISVS…KNHASVTVVV (145 aa).

Belongs to the PurH family.

The catalysed reaction is (6R)-10-formyltetrahydrofolate + 5-amino-1-(5-phospho-beta-D-ribosyl)imidazole-4-carboxamide = 5-formamido-1-(5-phospho-D-ribosyl)imidazole-4-carboxamide + (6S)-5,6,7,8-tetrahydrofolate. The enzyme catalyses IMP + H2O = 5-formamido-1-(5-phospho-D-ribosyl)imidazole-4-carboxamide. Its pathway is purine metabolism; IMP biosynthesis via de novo pathway; 5-formamido-1-(5-phospho-D-ribosyl)imidazole-4-carboxamide from 5-amino-1-(5-phospho-D-ribosyl)imidazole-4-carboxamide (10-formyl THF route): step 1/1. It participates in purine metabolism; IMP biosynthesis via de novo pathway; IMP from 5-formamido-1-(5-phospho-D-ribosyl)imidazole-4-carboxamide: step 1/1. The chain is Bifunctional purine biosynthesis protein PurH from Streptococcus pyogenes serotype M6 (strain ATCC BAA-946 / MGAS10394).